Reading from the N-terminus, the 464-residue chain is tRNA-2-methylthio-N(6)-dimethylallyladenosine synthase (464 aa).

Positions 19 to 135 constitute an MTTase N-terminal domain; sequence GSYWITTFGC…LENLLGKVDL (117 aa). Residues C28, C64, C98, C170, C174, and C177 each coordinate [4Fe-4S] cluster. The region spanning 156 to 393 is the Radical SAM core domain; it reads RESSICGWVN…NELVETTSKQ (238 aa). In terms of domain architecture, TRAM spans 396 to 464; the sequence is ERYLDSIESV…PFSLTGILCL (69 aa).

It belongs to the methylthiotransferase family. MiaB subfamily. In terms of assembly, monomer. Requires [4Fe-4S] cluster as cofactor.

It is found in the cytoplasm. The catalysed reaction is N(6)-dimethylallyladenosine(37) in tRNA + (sulfur carrier)-SH + AH2 + 2 S-adenosyl-L-methionine = 2-methylsulfanyl-N(6)-dimethylallyladenosine(37) in tRNA + (sulfur carrier)-H + 5'-deoxyadenosine + L-methionine + A + S-adenosyl-L-homocysteine + 2 H(+). In terms of biological role, catalyzes the methylthiolation of N6-(dimethylallyl)adenosine (i(6)A), leading to the formation of 2-methylthio-N6-(dimethylallyl)adenosine (ms(2)i(6)A) at position 37 in tRNAs that read codons beginning with uridine. The sequence is that of tRNA-2-methylthio-N(6)-dimethylallyladenosine synthase from Prochlorococcus marinus (strain MIT 9215).